The primary structure comprises 247 residues: tRNA pseudouridine synthase A (247 aa).

Residue aspartate 52 is the Nucleophile of the active site. Tyrosine 113 is a substrate binding site.

Belongs to the tRNA pseudouridine synthase TruA family. Homodimer.

It carries out the reaction uridine(38/39/40) in tRNA = pseudouridine(38/39/40) in tRNA. Formation of pseudouridine at positions 38, 39 and 40 in the anticodon stem and loop of transfer RNAs. The chain is tRNA pseudouridine synthase A from Sinorhizobium medicae (strain WSM419) (Ensifer medicae).